A 69-amino-acid polypeptide reads, in one-letter code: DNA gyrase inhibitor YacG (69 aa).

Zn(2+) contacts are provided by cysteine 13, cysteine 16, cysteine 32, and cysteine 36.

It belongs to the DNA gyrase inhibitor YacG family. As to quaternary structure, interacts with GyrB. The cofactor is Zn(2+).

In terms of biological role, inhibits all the catalytic activities of DNA gyrase by preventing its interaction with DNA. Acts by binding directly to the C-terminal domain of GyrB, which probably disrupts DNA binding by the gyrase. The polypeptide is DNA gyrase inhibitor YacG (Neisseria gonorrhoeae (strain ATCC 700825 / FA 1090)).